Consider the following 162-residue polypeptide: MWKVSALLFVLGSASLWVLAEGASTGQPEDDTETTGLEGGVAMPGAEDDVVTPGTSEDRYKSGLTTLVATSVNSVTGIRIEDLPTSESTVHAQEQSPSATASNVATSHSTEKVDGDTQTTVEKDGLSTVTLVGIIVGVLLAIGFIGAIIVVVMRKMSGRYSP.

The signal sequence occupies residues 1-22 (MWKVSALLFVLGSASLWVLAEG). Residues 23 to 57 (ASTGQPEDDTETTGLEGGVAMPGAEDDVVTPGTSE) are disordered. Residues 23-131 (ASTGQPEDDT…EKDGLSTVTL (109 aa)) lie on the Extracellular side of the membrane. O-linked (GalNAc...) threonine glycosylation is found at threonine 25, threonine 32, threonine 34, threonine 35, threonine 52, threonine 55, threonine 65, threonine 66, threonine 76, and threonine 85. Over residues 85 to 108 (TSESTVHAQEQSPSATASNVATSH) the composition is skewed to polar residues. Residues 85 to 119 (TSESTVHAQEQSPSATASNVATSHSTEKVDGDTQT) are disordered. O-linked (GalNAc...) serine glycosylation is found at serine 86 and serine 88. O-linked (GalNAc...) threonine glycosylation is present at threonine 89. Serine 96 and serine 98 each carry an O-linked (GalNAc...) serine glycan. Residue threonine 100 is glycosylated (O-linked (GalNAc...) threonine). O-linked (GalNAc...) serine glycosylation is present at serine 102. Residue threonine 106 is glycosylated (O-linked (GalNAc...) threonine). Serine 107 and serine 109 each carry an O-linked (GalNAc...) serine glycan. Residues 109-119 (STEKVDGDTQT) show a composition bias toward basic and acidic residues. O-linked (GalNAc...) threonine glycosylation is found at threonine 110, threonine 117, threonine 119, and threonine 120. Residues 132–152 (VGIIVGVLLAIGFIGAIIVVV) traverse the membrane as a helical segment. Residues 133-137 (GIIVG) form a requires for dimerization and lipid rafts association region. Residues 153–162 (MRKMSGRYSP) lie on the Cytoplasmic side of the membrane. Residues 154–155 (RK) form a requires for interaction with MSN and EZR region.

It belongs to the podoplanin family. Homodimer. Interacts with CLEC1B; the interaction is independent of CLEC1B glycosylation and activates CLEC1B; the interaction is dependent of sialic acid on O-glycans. Interacts with CD9; this interaction is homophilic and attenuates platelet aggregation and pulmonary metastasis induced by PDPN. Interacts with LGALS8; the interaction is glycosylation-dependent; may participate in connection of the lymphatic endothelium to the surrounding extracellular matrix. Interacts with HSPA9. Interacts (via extracellular domain) with CD44; this interaction is required for PDPN-mediated directional migration and regulation of lamellipodia extension/stabilization during cell spreading and migration. Interacts (via cytoplasmic domain) with MSN and EZR; activates RHOA and promotes epithelial-mesenchymal transition. Interacts with CCL21; relocalized PDPN to the basolateral membrane. Extensively O-glycosylated. Contains sialic acid residues. O-glycosylation is necessary for platelet aggregation activity. Disialylated at Thr-52; sialic acid is critical for platelet-aggregating activity and for CLEC1B interaction. In terms of processing, the N-terminus is blocked. Post-translationally, cleaved by a metalloprotease within its extracellular (EC) domain, generating a membrane-bound C-terminal fragment (PCTF33) and an extracellular fragment. The resulting membrane-bound C-terminal fragment (PCTF33) is further processed between Val-150 and Val-151 by PSEN1/gamma-secretase generating the intracellular domain of podoplanin (PICD). Highly expressed in placenta, lung, skeletal muscle and brain. Weakly expressed in brain, kidney and liver. In placenta, expressed on the apical plasma membrane of endothelium. In lung, expressed in alveolar epithelium. Up-regulated in colorectal tumors and expressed in 25% of early oral squamous cell carcinomas.

The protein localises to the membrane. It localises to the cell projection. Its subcellular location is the lamellipodium membrane. It is found in the filopodium membrane. The protein resides in the microvillus membrane. The protein localises to the ruffle membrane. It localises to the membrane raft. Its subcellular location is the apical cell membrane. It is found in the basolateral cell membrane. The protein resides in the invadopodium. The protein localises to the cytoplasm. It localises to the cytosol. Functionally, mediates effects on cell migration and adhesion through its different partners. During development plays a role in blood and lymphatic vessels separation by binding CLEC1B, triggering CLEC1B activation in platelets and leading to platelet activation and/or aggregation. Interaction with CD9, on the contrary, attenuates platelet aggregation induced by PDPN. Through MSN or EZR interaction promotes epithelial-mesenchymal transition (EMT) leading to ERZ phosphorylation and triggering RHOA activation leading to cell migration increase and invasiveness. Interaction with CD44 promotes directional cell migration in epithelial and tumor cells. In lymph nodes (LNs), controls fibroblastic reticular cells (FRCs) adhesion to the extracellular matrix (ECM) and contraction of the actomyosin by maintaining ERM proteins (EZR; MSN and RDX) and MYL9 activation through association with unknown transmembrane proteins. Engagement of CLEC1B by PDPN promotes FRCs relaxation by blocking lateral membrane interactions leading to reduction of ERM proteins (EZR; MSN and RDX) and MYL9 activation. Through binding with LGALS8 may participate in connection of the lymphatic endothelium to the surrounding extracellular matrix. In keratinocytes, induces changes in cell morphology showing an elongated shape, numerous membrane protrusions, major reorganization of the actin cytoskeleton, increased motility and decreased cell adhesion. Controls invadopodia stability and maturation leading to efficient degradation of the extracellular matrix (ECM) in tumor cells through modulation of RHOC activity in order to activate ROCK1/ROCK2 and LIMK1/LIMK2 and inactivation of CFL1. Required for normal lung cell proliferation and alveolus formation at birth. Does not function as a water channel or as a regulator of aquaporin-type water channels. Does not have any effect on folic acid or amino acid transport. The protein is Podoplanin of Homo sapiens (Human).